Here is a 119-residue protein sequence, read N- to C-terminus: V-type proton ATPase subunit F (119 aa).

Belongs to the V-ATPase F subunit family. V-ATPase is a heteromultimeric enzyme made up of two complexes: the ATP-hydrolytic V1 complex and the proton translocation V0 complex. The V1 complex consists of three catalytic AB heterodimers that form a heterohexamer, three peripheral stalks each consisting of EG heterodimers, one central rotor including subunits D and F, and the regulatory subunits C and H. The proton translocation complex V0 consists of the proton transport subunit a, a ring of proteolipid subunits c9c'', rotary subunit d, subunits e and f, and the accessory subunits ATP6AP1/Ac45 and ATP6AP2/PRR. As to expression, expressed in brain (at protein level).

It is found in the cytoplasmic vesicle. Its subcellular location is the secretory vesicle. The protein localises to the synaptic vesicle membrane. The protein resides in the clathrin-coated vesicle membrane. Subunit of the V1 complex of vacuolar(H+)-ATPase (V-ATPase), a multisubunit enzyme composed of a peripheral complex (V1) that hydrolyzes ATP and a membrane integral complex (V0) that translocates protons. V-ATPase is responsible for acidifying and maintaining the pH of intracellular compartments and in some cell types, is targeted to the plasma membrane, where it is responsible for acidifying the extracellular environment. The chain is V-type proton ATPase subunit F (ATP6V1F) from Bos taurus (Bovine).